The chain runs to 229 residues: MRSAKVGVARQLETKKPQTGRKISTSSRGTIHSQQSQPEDIQMKYTRKELKEYRQLFNMFDTDGSGAIGNEELKQAMISIGLHANKAEIDNVIKEVDADGNGEIDFEEFCACMKKSQNIVKSTNEELIRECFEIFDQDRNGIITENEFKYIAKEFGDFDDELAEKVFRELDVSANGHLSADQFATIVEDYLLNDPKHDIDTGDSDVERYDDRHDDRASPMPNHLSTVPE.

Residues 1-41 form a disordered region; sequence MRSAKVGVARQLETKKPQTGRKISTSSRGTIHSQQSQPEDI. The span at 21-39 shows a compositional bias: polar residues; it reads RKISTSSRGTIHSQQSQPE. EF-hand domains lie at 48-83, 84-119, 123-158, and 159-193; these read KELKEYRQLFNMFDTDGSGAIGNEELKQAMISIGLH, ANKAEIDNVIKEVDADGNGEIDFEEFCACMKKSQNI, TNEELIRECFEIFDQDRNGIITENEFKYIAKEFGDF, and DDELAEKVFRELDVSANGHLSADQFATIVEDYLLN. 13 residues coordinate Ca(2+): Asp61, Asp63, Ser65, Glu72, Asp97, Asp99, Asn101, Glu103, Glu108, Asp136, Asp138, Asn140, and Glu147. The span at 194-217 shows a compositional bias: basic and acidic residues; that stretch reads DPKHDIDTGDSDVERYDDRHDDRA. Positions 194–229 are disordered; the sequence is DPKHDIDTGDSDVERYDDRHDDRASPMPNHLSTVPE.

This is an uncharacterized protein from Caenorhabditis elegans.